Consider the following 85-residue polypeptide: Putative membrane protein insertion efficiency factor (85 aa).

It belongs to the UPF0161 family.

It is found in the cell inner membrane. Its function is as follows. Could be involved in insertion of integral membrane proteins into the membrane. The sequence is that of Putative membrane protein insertion efficiency factor from Dictyoglomus thermophilum (strain ATCC 35947 / DSM 3960 / H-6-12).